The sequence spans 500 residues: Low-density lipoprotein receptor-related protein 11 (500 aa).

Positions M1–A37 are cleaved as a signal peptide. At A38 to G450 the chain is on the extracellular side. Positions A99–Y184 constitute an MANSC domain. N164 and N291 each carry an N-linked (GlcNAc...) asparagine glycan. The 96-residue stretch at P210–G305 folds into the PKD domain. The LDL-receptor class A domain occupies T309–Q345. 3 disulfide bridges follow: C310/C322, C317/C335, and C329/C344. Residues A358–P445 form a disordered region. N401 is a glycosylation site (N-linked (GlcNAc...) asparagine). The chain crosses the membrane as a helical span at residues A451–L473. The Cytoplasmic segment spans residues R474–L500. S491 bears the Phosphoserine mark.

Belongs to the LDLR family.

The protein resides in the membrane. The protein is Low-density lipoprotein receptor-related protein 11 (LRP11) of Homo sapiens (Human).